The sequence spans 170 residues: uncharacterized protein (170 aa).

This is an uncharacterized protein from Acidianus convivator (ATV).